A 97-amino-acid chain; its full sequence is Aspartyl/glutamyl-tRNA(Asn/Gln) amidotransferase subunit C (97 aa).

Belongs to the GatC family. As to quaternary structure, heterotrimer of A, B and C subunits.

The enzyme catalyses L-glutamyl-tRNA(Gln) + L-glutamine + ATP + H2O = L-glutaminyl-tRNA(Gln) + L-glutamate + ADP + phosphate + H(+). It carries out the reaction L-aspartyl-tRNA(Asn) + L-glutamine + ATP + H2O = L-asparaginyl-tRNA(Asn) + L-glutamate + ADP + phosphate + 2 H(+). Allows the formation of correctly charged Asn-tRNA(Asn) or Gln-tRNA(Gln) through the transamidation of misacylated Asp-tRNA(Asn) or Glu-tRNA(Gln) in organisms which lack either or both of asparaginyl-tRNA or glutaminyl-tRNA synthetases. The reaction takes place in the presence of glutamine and ATP through an activated phospho-Asp-tRNA(Asn) or phospho-Glu-tRNA(Gln). This Nostoc punctiforme (strain ATCC 29133 / PCC 73102) protein is Aspartyl/glutamyl-tRNA(Asn/Gln) amidotransferase subunit C.